The sequence spans 446 residues: tRNA modification GTPase MnmE (446 aa).

(6S)-5-formyl-5,6,7,8-tetrahydrofolate contacts are provided by Arg24, Glu81, and Lys120. One can recognise a TrmE-type G domain in the interval Gly216 to Leu368. Residue Asn226 coordinates K(+). GTP-binding positions include Asn226 to Ser231, Thr245 to Thr251, and Asp270 to Gly273. Ser230 contributes to the Mg(2+) binding site. K(+) is bound by residues Thr245, Val247, and Thr250. A Mg(2+)-binding site is contributed by Thr251. Lys446 lines the (6S)-5-formyl-5,6,7,8-tetrahydrofolate pocket.

The protein belongs to the TRAFAC class TrmE-Era-EngA-EngB-Septin-like GTPase superfamily. TrmE GTPase family. As to quaternary structure, homodimer. Heterotetramer of two MnmE and two MnmG subunits. Requires K(+) as cofactor.

It is found in the cytoplasm. Its function is as follows. Exhibits a very high intrinsic GTPase hydrolysis rate. Involved in the addition of a carboxymethylaminomethyl (cmnm) group at the wobble position (U34) of certain tRNAs, forming tRNA-cmnm(5)s(2)U34. The sequence is that of tRNA modification GTPase MnmE from Xanthomonas oryzae pv. oryzae (strain MAFF 311018).